The sequence spans 394 residues: Enoyl-CoA delta isomerase 2 (394 aa).

A mitochondrion-targeting transit peptide spans 1 to 38 (MAMAYLAWRLARRSCPSSLQVTSFPVVQLHMNRTAMRA). The ACB domain maps to 39–124 (SQKDFENSMN…VSSLSPSLES (86 aa)). K51 bears the N6-acetyllysine; alternate mark. K51 is subject to N6-succinyllysine; alternate. K55 is modified (N6-succinyllysine). K62 carries the post-translational modification N6-acetyllysine; alternate. An N6-succinyllysine; alternate modification is found at K62. An an acyl-CoA-binding site is contributed by 66-70 (YALYK). N6-succinyllysine occurs at positions 70, 81, and 90. Residue K92 is modified to N6-acetyllysine; alternate. K92 carries the N6-succinyllysine; alternate modification. Residue K92 coordinates an acyl-CoA. S101 carries the phosphoserine modification. An an acyl-CoA-binding site is contributed by Y111. S119 is modified (phosphoserine). The interval 151–322 (TKIMFNRPKK…AQGLVTEVFP (172 aa)) is ECH-like. K161 is modified (N6-succinyllysine). Position 198–202 (198–202 (SGNDL)) interacts with substrate. K289 carries the N6-succinyllysine modification. The Microbody targeting signal motif lies at 392 to 394 (SKL).

It in the C-terminal section; belongs to the enoyl-CoA hydratase/isomerase family. As to expression, abundant in heart, skeletal muscle and liver. Expressed in CD34(+) T-cells and CD34(+) bone marrow cells.

It localises to the mitochondrion. It is found in the peroxisome matrix. The catalysed reaction is a (3Z)-enoyl-CoA = a 4-saturated (2E)-enoyl-CoA. The enzyme catalyses (3Z)-octenoyl-CoA = (2E)-octenoyl-CoA. It carries out the reaction a (3E)-enoyl-CoA = a 4-saturated (2E)-enoyl-CoA. It catalyses the reaction (2E)-tetradecenoyl-CoA = (3Z)-tetradecenoyl-CoA. The catalysed reaction is (3E)-tetradecenoyl-CoA = (2E)-tetradecenoyl-CoA. The enzyme catalyses (3E)-octenoyl-CoA = (2E)-octenoyl-CoA. It carries out the reaction (3E)-nonenoyl-CoA = (2E)-nonenoyl-CoA. Its pathway is lipid metabolism; fatty acid beta-oxidation. Functionally, able to isomerize both 3-cis and 3-trans double bonds into the 2-trans form in a range of enoyl-CoA species. Has a preference for 3-trans substrates. The polypeptide is Enoyl-CoA delta isomerase 2 (ECI2) (Homo sapiens (Human)).